A 273-amino-acid chain; its full sequence is Dermonecrotic toxin LdSicTox-alphaIB3av (273 aa).

H5 is an active-site residue. Mg(2+)-binding residues include E25 and D27. Catalysis depends on H41, which acts as the Nucleophile. Cystine bridges form between C45–C51 and C47–C190. Residue D85 participates in Mg(2+) binding.

It belongs to the arthropod phospholipase D family. Class II subfamily. The cofactor is Mg(2+). Expressed by the venom gland.

It localises to the secreted. It catalyses the reaction an N-(acyl)-sphingosylphosphocholine = an N-(acyl)-sphingosyl-1,3-cyclic phosphate + choline. The catalysed reaction is an N-(acyl)-sphingosylphosphoethanolamine = an N-(acyl)-sphingosyl-1,3-cyclic phosphate + ethanolamine. The enzyme catalyses a 1-acyl-sn-glycero-3-phosphocholine = a 1-acyl-sn-glycero-2,3-cyclic phosphate + choline. It carries out the reaction a 1-acyl-sn-glycero-3-phosphoethanolamine = a 1-acyl-sn-glycero-2,3-cyclic phosphate + ethanolamine. In terms of biological role, dermonecrotic toxins cleave the phosphodiester linkage between the phosphate and headgroup of certain phospholipids (sphingolipid and lysolipid substrates), forming an alcohol (often choline) and a cyclic phosphate. This toxin acts on sphingomyelin (SM). It may also act on ceramide phosphoethanolamine (CPE), lysophosphatidylcholine (LPC) and lysophosphatidylethanolamine (LPE), but not on lysophosphatidylserine (LPS), and lysophosphatidylglycerol (LPG). It acts by transphosphatidylation, releasing exclusively cyclic phosphate products as second products. Induces dermonecrosis, hemolysis, increased vascular permeability, edema, inflammatory response, and platelet aggregation. This is Dermonecrotic toxin LdSicTox-alphaIB3av from Loxosceles deserta (Desert recluse spider).